Here is a 395-residue protein sequence, read N- to C-terminus: MEGPQELLSGKLRLCFTPAARTSLLLLKLNDAALRALQECHRQQVRPVIAFQGNRGYLRLPGPHWSCLFSFIVSQCGQEGPGGPGLDLVCQCPGRSGPNRLHCLGPLRERLTIWAAMDSIPAPSSLQRHNRTEDARDRESWQNVGDYPEADTISQSQMGLEEVPDPLASSQGQSLPGSSREHMAQWEVRNQTLLPNRDPDQALPPSASQKHVDKKRPAPAAMVELKQKRLRTLAPSPLQGLPSQDLQEEDWEQEDKDEDMGPRLEHSPSVQADSESLSPEEVPDYLLQYRAIHSAEQQHAYEQDFETDYAEYRILHARVAAASQRFIELAAEMNNVQRGTPEHKALEEKIVQEYKKFRKRYPGYREEKRRCEYLHQKLSHIKGLILEFEEKNRGS.

4 disordered regions span residues 124–149 (SSLQ…DYPE), 163–182 (VPDP…SREH), 194–218 (LPNR…KRPA), and 233–279 (LAPS…SLSP). Over residues 130 to 140 (NRTEDARDRES) the composition is skewed to basic and acidic residues. Positions 168–177 (ASSQGQSLPG) are enriched in polar residues. A compositionally biased stretch (acidic residues) spans 246–258 (LQEEDWEQEDKDE). Polar residues predominate over residues 268 to 277 (PSVQADSESL). Residues 283 to 393 (PDYLLQYRAI…LILEFEEKNR (111 aa)) form the OCEL domain.

This sequence belongs to the ELL/occludin family. Interacts with AFF4. Component of the super elongation complex (SEC), at least composed of EAF1, EAF2, CDK9, MLLT3/AF9, AFF (AFF1 or AFF4), the P-TEFb complex and ELL (ELL, ELL2 or ELL3). Component of the little elongation complex (LEC), at least composed of ELL (ELL, ELL2 or ELL3), ZC3H8, ICE1 and ICE2.

The protein localises to the nucleus. Functionally, enhancer-binding elongation factor that specifically binds enhancers in embryonic stem cells (ES cells), marks them, and is required for their future activation during stem cell specification. Elongation factor component of the super elongation complex (SEC), a complex required to increase the catalytic rate of RNA polymerase II transcription by suppressing transient pausing by the polymerase at multiple sites along the DNA. Component of the little elongation complex (LEC), a complex required to regulate small nuclear RNA (snRNA) gene transcription by RNA polymerase II and III. Does not only bind to enhancer regions of active genes, but also marks the enhancers that are in a poised or inactive state in ES cells and is required for establishing proper RNA polymerase II occupancy at developmentally regulated genes in a cohesin-dependent manner. Probably required for priming developmentally regulated genes for later recruitment of the super elongation complex (SEC), for transcriptional activation during differentiation. Required for recruitment of P-TEFb within SEC during differentiation. Probably preloaded on germ cell chromatin, suggesting that it may prime gene activation by marking enhancers as early as in the germ cells. Promoting epithelial-mesenchymal transition (EMT). The polypeptide is RNA polymerase II elongation factor ELL3 (ELL3) (Bos taurus (Bovine)).